A 359-amino-acid chain; its full sequence is ELAV-like protein 2 (359 aa).

The disordered stretch occupies residues 1–39; that stretch reads METQLSNGPTCNNTANGPTTVNNNCSSPVDSGNTEDSKT. 2 RRM domains span residues 39-117 and 125-205; these read TNLI…YARP and ANLY…FANN. Ser-221 bears the Phosphoserine mark. Positions 276 to 354 constitute an RRM 3 domain; the sequence is WCIFVYNLAP…RVLQVSFKTN (79 aa).

Belongs to the RRM elav family. As to quaternary structure, interacts with IGF2BP1. Interacts with MAP1B light chain LC1.

In terms of biological role, RNA-binding protein that binds to the 3' untranslated region (3'UTR) of target mRNAs. Seems to recognize a GAAA motif. Can bind to its own 3'UTR, the FOS 3'UTR and the ID 3'UTR. The sequence is that of ELAV-like protein 2 (Elavl2) from Rattus norvegicus (Rat).